A 328-amino-acid chain; its full sequence is Serine/threonine-protein phosphatase PP2A-2 catalytic subunit (328 aa).

Mn(2+) contacts are provided by D76, H78, D104, and N136. The active-site Proton donor is the H137. H186 and H260 together coordinate Mn(2+). Residue L328 is modified to Leucine methyl ester.

This sequence belongs to the PPP phosphatase family. PP-2A subfamily. Mn(2+) is required as a cofactor.

It carries out the reaction O-phospho-L-seryl-[protein] + H2O = L-seryl-[protein] + phosphate. It catalyses the reaction O-phospho-L-threonyl-[protein] + H2O = L-threonyl-[protein] + phosphate. This Blumeria hordei (Barley powdery mildew) protein is Serine/threonine-protein phosphatase PP2A-2 catalytic subunit (PP2A-2).